The chain runs to 419 residues: Elongation factor Tu, chloroplastic (419 aa).

Residues 10 to 214 (KPHVNIGTIG…TVDEHIPTPK (205 aa)) form the tr-type G domain. Positions 19–26 (GHVDHGKT) are G1. Residue 19–26 (GHVDHGKT) coordinates GTP. T26 is a binding site for Mg(2+). A G2 region spans residues 60–64 (GITIN). Positions 81-84 (DCPG) are G3. Residues 81–85 (DCPGH) and 136–139 (NKAD) each bind GTP. Positions 136–139 (NKAD) are G4. The segment at 174 to 176 (SAL) is G5.

It belongs to the TRAFAC class translation factor GTPase superfamily. Classic translation factor GTPase family. EF-Tu/EF-1A subfamily.

Its subcellular location is the plastid. It is found in the chloroplast. The catalysed reaction is GTP + H2O = GDP + phosphate + H(+). Functionally, GTP hydrolase that promotes the GTP-dependent binding of aminoacyl-tRNA to the A-site of ribosomes during protein biosynthesis. The polypeptide is Elongation factor Tu, chloroplastic (tufA) (Stigeoclonium helveticum (Green alga)).